The following is a 620-amino-acid chain: Cryptochrome-1 (620 aa).

Residues 3–132 (VNAVHWFRKG…EVIVRISHTL (130 aa)) form the Photolyase/cryptochrome alpha/beta domain. 3 short sequence motifs (LIR) span residues 50–54 (NRWRF), 82–87 (DVFPRL), and 151–156 (KRFQTL). Ser-252 contributes to the FAD binding site. 4 consecutive short sequence motifs (LIR) follow at residues 255 to 260 (LRFGCL), 271 to 276 (DLYKKV), 285 to 290 (SLYGQL), and 335 to 339 (TGFPW). Gln-289 lines the FAD pocket. Residue His-355 coordinates FAD. Residues 379-384 (KVFEEL) carry the LIR 8 motif. 387 to 389 (DAD) contacts FAD. 5 consecutive short sequence motifs (LIR) follow at residues 395 to 400 (GSWMWL), 411 to 416 (HCYCPV), 430 to 435 (RRYLPV), 486 to 491 (QIYQQL), and 492 to 497 (SRYRGL). The segment at 593–620 (TGISAGKRPNPEEETQSVGPKVQRQSTN) is disordered.

The protein belongs to the DNA photolyase class-1 family. In terms of assembly, component of the circadian core oscillator, which includes the CRY proteins, CLOCK or NPAS2, BMAL1 or BMAL2, CSNK1E, and the PER proteins. The cofactor is FAD. (6R)-5,10-methylene-5,6,7,8-tetrahydrofolate serves as cofactor. As to expression, expressed in the retina.

It localises to the cytoplasm. Its subcellular location is the nucleus. Its function is as follows. Transcriptional repressor which forms a core component of the circadian clock. The circadian clock, an internal time-keeping system, regulates various physiological processes through the generation of approximately 24 hour circadian rhythms in gene expression, which are translated into rhythms in metabolism and behavior. It is derived from the Latin roots 'circa' (about) and 'diem' (day) and acts as an important regulator of a wide array of physiological functions including metabolism, sleep, body temperature, blood pressure, endocrine, immune, cardiovascular, and renal function. Consists of two major components: the central clock, residing in the suprachiasmatic nucleus (SCN) of the brain, and the peripheral clocks that are present in nearly every tissue and organ system. Both the central and peripheral clocks can be reset by environmental cues, also known as Zeitgebers (German for 'timegivers'). The predominant Zeitgeber for the central clock is light, which is sensed by retina and signals directly to the SCN. The central clock entrains the peripheral clocks through neuronal and hormonal signals, body temperature and feeding-related cues, aligning all clocks with the external light/dark cycle. Circadian rhythms allow an organism to achieve temporal homeostasis with its environment at the molecular level by regulating gene expression to create a peak of protein expression once every 24 hours to control when a particular physiological process is most active with respect to the solar day. Transcription and translation of core clock components (CLOCK, NPAS2, BMAL1, BMAL2, PER1, PER2, PER3, CRY1 and CRY2) plays a critical role in rhythm generation, whereas delays imposed by post-translational modifications (PTMs) are important for determining the period (tau) of the rhythms (tau refers to the period of a rhythm and is the length, in time, of one complete cycle). A diurnal rhythm is synchronized with the day/night cycle, while the ultradian and infradian rhythms have a period shorter and longer than 24 hours, respectively. Disruptions in the circadian rhythms contribute to the pathology of cardiovascular diseases, cancer, metabolic syndromes and aging. A transcription/translation feedback loop (TTFL) forms the core of the molecular circadian clock mechanism. Transcription factors, CLOCK or NPAS2 and BMAL1 or BMAL2, form the positive limb of the feedback loop, act in the form of a heterodimer and activate the transcription of core clock genes and clock-controlled genes (involved in key metabolic processes), harboring E-box elements (5'-CACGTG-3') within their promoters. The core clock genes: PER1/2/3 and CRY1/2 which are transcriptional repressors form the negative limb of the feedback loop and interact with the CLOCK|NPAS2-BMAL1|BMAL2 heterodimer inhibiting its activity and thereby negatively regulating their own expression. This heterodimer also activates nuclear receptors NR1D1/2 and RORA/B/G, which form a second feedback loop and which activate and repress BMAL1 transcription, respectively. CRY1 and CRY2 have redundant functions but also differential and selective contributions at least in defining the pace of the SCN circadian clock and its circadian transcriptional outputs. More potent transcriptional repressor in cerebellum and liver than CRY2, though more effective in lengthening the period of the SCN oscillator. On its side, CRY2 seems to play a critical role in tuning SCN circadian period by opposing the action of CRY1. With CRY2, is dispensable for circadian rhythm generation but necessary for the development of intercellular networks for rhythm synchrony. Capable of translocating circadian clock core proteins such as PER proteins to the nucleus. Interacts with CLOCK-BMAL1 independently of PER proteins and is found at CLOCK-BMAL1-bound sites, suggesting that CRY may act as a molecular gatekeeper to maintain CLOCK-BMAL1 in a poised and repressed state until the proper time for transcriptional activation. This Erithacus rubecula (European robin) protein is Cryptochrome-1 (CRY1).